Here is a 274-residue protein sequence, read N- to C-terminus: Large ribosomal subunit protein uL2 (274 aa).

The disordered stretch occupies residues 224 to 256 (AMNPIDHPHGGGEGRTGEGRHAVDPWGNLTKGY). The span at 229–246 (DHPHGGGEGRTGEGRHAV) shows a compositional bias: basic and acidic residues.

This sequence belongs to the universal ribosomal protein uL2 family. Part of the 50S ribosomal subunit. Forms a bridge to the 30S subunit in the 70S ribosome.

One of the primary rRNA binding proteins. Required for association of the 30S and 50S subunits to form the 70S ribosome, for tRNA binding and peptide bond formation. It has been suggested to have peptidyltransferase activity; this is somewhat controversial. Makes several contacts with the 16S rRNA in the 70S ribosome. The chain is Large ribosomal subunit protein uL2 from Acidovorax ebreus (strain TPSY) (Diaphorobacter sp. (strain TPSY)).